Consider the following 601-residue polypeptide: MDLIRNFSIIAHIDHGKSTLADRIIQLCGGLSDREMEAQVLDSMDIERERGITIKAQTAALNYKAKDGKIYNINLIDTPGHVDFSYEVSRSLSACEGALLVVDASQGVEAQTVANCYMALGLGVEVVPVLNKIDLPQADPERAKKEIEDVIGIDASEAVTCSAKTGLGVADVIEEMIARVPPPTGNAEDPLQALIIDSWFDNYVGVVMLVRIVNGTLKPKDKITLMANGSSHLVEHVGVFSPKSVDRPELSAGQVGFVIAGIKELKAAKVGDTVTHSPGQQGRVPASEPLPGFKEVKPQVFAGLYPVESSEYDQLRESLEKLQLNDAALLYEPEVSQALGFGFRCGFLGLLHMEIVQERLERQYGMNLITTAPTVVYQVEQSSGSIISVDNPSKMPEASKINTILEPIVTVNLYMPQEYVGSIITLCVGKRGIQMDMNYLGRQVKLTYELPMAEIVLDFFDKMKSISRGYASMDYEFKEYRPADVVKVDILINGERVDALSVIVHRSNSQSRGREVVAKMRDIIPRQMFDVAIQAAIGSNIVARENVKALRKNVLAKCYGGDISRKRKLLEKQKEGKKRMKQVGNVEIPQEAFLAILQVED.

The tr-type G domain occupies 2–184 (DLIRNFSIIA…EMIARVPPPT (183 aa)). GTP is bound by residues 14–19 (DHGKST) and 131–134 (NKID).

This sequence belongs to the TRAFAC class translation factor GTPase superfamily. Classic translation factor GTPase family. LepA subfamily.

It localises to the cell inner membrane. It catalyses the reaction GTP + H2O = GDP + phosphate + H(+). In terms of biological role, required for accurate and efficient protein synthesis under certain stress conditions. May act as a fidelity factor of the translation reaction, by catalyzing a one-codon backward translocation of tRNAs on improperly translocated ribosomes. Back-translocation proceeds from a post-translocation (POST) complex to a pre-translocation (PRE) complex, thus giving elongation factor G a second chance to translocate the tRNAs correctly. Binds to ribosomes in a GTP-dependent manner. This is Elongation factor 4 from Polynucleobacter necessarius subsp. necessarius (strain STIR1).